A 316-amino-acid chain; its full sequence is Protoheme IX farnesyltransferase (316 aa).

The next 9 membrane-spanning stretches (helical) occupy residues 28 to 48 (IIPL…KGQV), 50 to 70 (PLLL…AQTL), 99 to 119 (HALI…VFFV), 122 to 142 (LSGF…THLL), 150 to 170 (IVIG…AVTG), 178 to 198 (ILFA…ALMI), 223 to 243 (IWLY…PLAA), 244 to 264 (CGVV…KKAW), and 293 to 313 (AMVI…ASLF).

It belongs to the UbiA prenyltransferase family. Protoheme IX farnesyltransferase subfamily.

The protein resides in the cell inner membrane. The enzyme catalyses heme b + (2E,6E)-farnesyl diphosphate + H2O = Fe(II)-heme o + diphosphate. Its pathway is porphyrin-containing compound metabolism; heme O biosynthesis; heme O from protoheme: step 1/1. Converts heme B (protoheme IX) to heme O by substitution of the vinyl group on carbon 2 of heme B porphyrin ring with a hydroxyethyl farnesyl side group. In Microcystis aeruginosa (strain NIES-843 / IAM M-2473), this protein is Protoheme IX farnesyltransferase.